The chain runs to 294 residues: MNFSHLYDIYYNRINKKLFEIIQELPFQDSVLFRAMKYSTLSGGKRLRACLIYATGETFQVNIAALDVISAAVELVHSYSLIHDDLPCIDNDYFRRGKISCHIKYGENFALLAGDALQGLAFNILSNSNMPGVHDSIRLKMIAEFSNAIGYSGMCIGQMLDLEKERKKINISELEKINLYKTAFLIRCSIRLAYFASNNFSKEVLFILDKFSVSIGLAFQIQDDILDLKNDIKKLESKRNKTKNTYPLLIGLKKSKIKIKELYKEAFFTLEILKKNFNVNILKLLTQFIMKRFK.

Lysine 45, arginine 48, and histidine 77 together coordinate isopentenyl diphosphate. Aspartate 84 and aspartate 90 together coordinate Mg(2+). A (2E)-geranyl diphosphate-binding site is contributed by arginine 95. Position 96 (arginine 96) interacts with isopentenyl diphosphate. (2E)-geranyl diphosphate contacts are provided by lysine 181, threonine 182, and glutamine 220.

This sequence belongs to the FPP/GGPP synthase family. Mg(2+) is required as a cofactor.

Its subcellular location is the cytoplasm. It catalyses the reaction isopentenyl diphosphate + (2E)-geranyl diphosphate = (2E,6E)-farnesyl diphosphate + diphosphate. This chain is Farnesyl diphosphate synthase (ispA), found in Buchnera aphidicola subsp. Schizaphis graminum (strain Sg).